A 280-amino-acid chain; its full sequence is Polyamine aminopropyltransferase 1 (280 aa).

The PABS domain occupies 3-237 (DIVFIERDPY…YWWTFSIASK (235 aa)). Gln33 lines the S-methyl-5'-thioadenosine pocket. His64 and Asp88 together coordinate spermidine. Residues Asp108 and 139–140 (DG) contribute to the S-methyl-5'-thioadenosine site. Asp157 serves as the catalytic Proton acceptor. 157–160 (DSTD) contacts spermidine.

Belongs to the spermidine/spermine synthase family. Homodimer or homotetramer.

The protein localises to the cytoplasm. It catalyses the reaction S-adenosyl 3-(methylsulfanyl)propylamine + putrescine = S-methyl-5'-thioadenosine + spermidine + H(+). It participates in amine and polyamine biosynthesis; spermidine biosynthesis; spermidine from putrescine: step 1/1. Its function is as follows. Catalyzes the irreversible transfer of a propylamine group from the amino donor S-adenosylmethioninamine (decarboxy-AdoMet) to putrescine (1,4-diaminobutane) to yield spermidine. The protein is Polyamine aminopropyltransferase 1 of Aquifex aeolicus (strain VF5).